We begin with the raw amino-acid sequence, 471 residues long: GDP-fucose protein O-fucosyltransferase 3 (471 aa).

The Cytoplasmic segment spans residues 1–8; that stretch reads MNRMWEKK. Residues 9–29 traverse the membrane as a helical; Signal-anchor for type II membrane protein segment; sequence FWISCFFIILFFILVTLQVMV. Residues 30-471 are Lumenal-facing; sequence ELGRFEKRET…EFWNLVFKFQ (442 aa). 4 N-linked (GlcNAc...) asparagine glycosylation sites follow: N102, N122, N160, and N310. C381 and C384 form a disulfide bridge. N457 is a glycosylation site (N-linked (GlcNAc...) asparagine).

The protein belongs to the glycosyltransferase 10 family.

Its subcellular location is the endoplasmic reticulum membrane. It carries out the reaction L-threonyl-[protein] + GDP-beta-L-fucose = 3-O-(alpha-L-fucosyl)-L-threonyl-[protein] + GDP + H(+). The enzyme catalyses L-seryl-[protein] + GDP-beta-L-fucose = 3-O-(alpha-L-fucosyl)-L-seryl-[protein] + GDP + H(+). It participates in protein modification; protein glycosylation. In terms of biological role, protein O-fucosyltransferase that specifically catalyzes O-fucosylation of serine or threonine residues in EMI domains of target proteins. Attaches fucose through an O-glycosidic linkage. O-fucosylation of EMI domain-containing proteins may be required for facilitating protein folding and secretion. The chain is GDP-fucose protein O-fucosyltransferase 3 (fut10) from Xenopus tropicalis (Western clawed frog).